The following is a 379-amino-acid chain: Putative FBD-associated F-box protein At5g38570 (379 aa).

In terms of domain architecture, F-box spans 1 to 47 (MDNINGLPDDLLVKILSFVPTYVAVSTCVLSKRWEFLWMWLPNLEFV). Residues 295 to 345 (CWNQPSSVLECLLSSLKILNWSAYFGRPQDRDIAVYILKNACHLKTATFLT) enclose the FBD domain.

The sequence is that of Putative FBD-associated F-box protein At5g38570 from Arabidopsis thaliana (Mouse-ear cress).